Reading from the N-terminus, the 46-residue chain is Sperm protamine P1 (46 aa).

It belongs to the protamine P1 family. As to expression, testis.

The protein resides in the nucleus. It is found in the chromosome. Protamines substitute for histones in the chromatin of sperm during the haploid phase of spermatogenesis. They compact sperm DNA into a highly condensed, stable and inactive complex. This chain is Sperm protamine P1 (PRM1), found in Glauconycteris beatrix (Beatrix's bat).